Reading from the N-terminus, the 575-residue chain is Eukaryotic translation initiation factor 3 subunit D (575 aa).

2 disordered regions span residues Pro36–Arg66 and Ser103–Val177. Basic and acidic residues predominate over residues Lys39 to Gly59. Over residues Phe109–Gly144 the composition is skewed to gly residues. Residues Gly163–Asp174 show a composition bias toward basic and acidic residues. Positions Asn302 to Pro316 are RNA gate.

It belongs to the eIF-3 subunit D family. As to quaternary structure, component of the eukaryotic translation initiation factor 3 (eIF-3) complex.

Its subcellular location is the cytoplasm. MRNA cap-binding component of the eukaryotic translation initiation factor 3 (eIF-3) complex, which is involved in protein synthesis of a specialized repertoire of mRNAs and, together with other initiation factors, stimulates binding of mRNA and methionyl-tRNAi to the 40S ribosome. The eIF-3 complex specifically targets and initiates translation of a subset of mRNAs involved in cell proliferation. In the eIF-3 complex, eif3d specifically recognizes and binds the 7-methylguanosine cap of a subset of mRNAs. This is Eukaryotic translation initiation factor 3 subunit D from Phaeosphaeria nodorum (strain SN15 / ATCC MYA-4574 / FGSC 10173) (Glume blotch fungus).